A 189-amino-acid chain; its full sequence is UPF0398 protein lhv_1265 (189 aa).

It belongs to the UPF0398 family.

The polypeptide is UPF0398 protein lhv_1265 (Lactobacillus helveticus (strain DPC 4571)).